The sequence spans 974 residues: Collagen alpha-1(I) chain (974 aa).

Positions 1–14 are enriched in low complexity; sequence GISVPGPMGPSGPR. The tract at residues 1-974 is disordered; it reads GISVPGPMGP…PGPPGPPGPP (974 aa). A 4-hydroxyproline mark is found at Pro-17, Pro-20, Pro-23, Pro-32, Pro-35, Pro-38, Pro-53, Pro-68, Pro-75, and Pro-81. The segment covering 25 to 44 has biased composition (low complexity); sequence PQGFQGPPGEPGEPGASGPM. A compositionally biased stretch (basic and acidic residues) spans 56-73; that stretch reads NGDDGEAGKPGRPGERRG. Lys-84 carries the post-translational modification 5-hydroxylysine; alternate. An O-linked (Gal...) hydroxylysine; alternate glycan is attached at Lys-84. At Ser-90 the chain carries Phosphoserine. A compositionally biased stretch (low complexity) spans 98 to 114; it reads DAGPAGPKGEPGSPGEN. A 4-hydroxyproline mark is found at Pro-108, Pro-111, Pro-117, Pro-126, Pro-132, Pro-153, Pro-162, Pro-165, Pro-192, Pro-195, Pro-207, Pro-213, Pro-222, Pro-228, Pro-231, and Pro-245. Positions 132-150 are enriched in low complexity; it reads PGASGPAGARGNDGATGAA. Residues 152–164 are compositionally biased toward pro residues; it reads PPGPTGPAGPPGF. Positions 198 to 228 are enriched in low complexity; the sequence is AGAAGPAGNPGADGQPGAKGANGAPGIAGAP. A 5-hydroxylysine modification is found at Lys-248. Pro-254, Pro-257, Pro-269, Pro-278, Pro-293, Pro-299, Pro-308, and Pro-314 each carry 4-hydroxyproline. A compositionally biased stretch (gly residues) spans 303 to 312; the sequence is GERGGPGSRG. Position 323 is a 5-hydroxylysine (Lys-323). A 4-hydroxyproline mark is found at Pro-328, Pro-337, Pro-343, Pro-349, Pro-358, Pro-361, Pro-370, Pro-379, Pro-385, Pro-397, Pro-406, Pro-415, Pro-418, Pro-436, Pro-454, Pro-460, Pro-466, Pro-472, Pro-484, Pro-493, Pro-505, Pro-520, Pro-527, and Pro-536. Over residues 352-378 the composition is skewed to low complexity; that stretch reads KGLTGSPGSPGPDGKTGPPGPAGQDGR. A compositionally biased stretch (low complexity) spans 387–406; the sequence is ARGQAGVMGFPGPKGAAGEP. Low complexity predominate over residues 504–517; that stretch reads APGNDGAKGDAGAP. Residue Lys-548 is modified to 5-hydroxylysine. 3 positions are modified to 4-hydroxyproline: Pro-554, Pro-569, and Pro-575. The segment covering 581-595 has biased composition (low complexity); it reads SGPSGPAGPTGARGA. Ser-584 carries the phosphoserine modification. 4-hydroxyproline occurs at positions 596, 602, 605, 614, 620, 638, 647, and 656. A compositionally biased stretch (low complexity) spans 608–635; the sequence is AGFAGPPGADGQPGAKGEPGDAGAKGDA. Residues 637 to 649 are compositionally biased toward pro residues; it reads PPGPAGPTGPPGP. A 5-hydroxylysine modification is found at Lys-659. A compositionally biased stretch (low complexity) spans 664-680; it reads SAGPPGATGFPGAAGRV. Pro-668 and Pro-674 each carry 4-hydroxyproline. Pro-682 bears the 3-hydroxyproline mark. Residues Pro-683, Pro-692, Pro-695, Pro-716, Pro-725, Pro-733, Pro-742, Pro-760, Pro-769, Pro-772, Pro-778, Pro-793, Pro-799, Pro-805, Pro-814, and Pro-820 each carry the 4-hydroxyproline modification. Positions 709–718 are enriched in low complexity; it reads ETGPAGRPGE. Over residues 730-742 the composition is skewed to low complexity; it reads KGSPGADGPAGAP. The segment covering 792–802 has biased composition (pro residues); that stretch reads PPGPVGPPGLA. Residues 804-826 are compositionally biased toward low complexity; that stretch reads PPGESGREGSPGAEGSPGRDGSP. Over residues 828 to 844 the composition is skewed to pro residues; the sequence is PKGPPGAPGAPGAPGPV. Residue Lys-829 is modified to 5-hydroxylysine. Pro-832, Pro-835, and Pro-838 each carry 4-hydroxyproline. The span at 865–879 shows a compositional bias: low complexity; sequence AGPAGARGPAGPQGP. A compositionally biased stretch (basic and acidic residues) spans 880-894; the sequence is RGDKGETGEQGDRRG. Lys-883 carries the post-translational modification 5-hydroxylysine. Residues Pro-905, Pro-908, Pro-926, and Pro-941 each carry the 4-hydroxyproline modification. Over residues 908–941 the composition is skewed to low complexity; it reads PGEQGPSGASGPAGPRGPPGSAGSPGKDGLNGLP. Pro-946 carries the post-translational modification 3-hydroxyproline. A 4-hydroxyproline modification is found at Pro-947. The segment covering 959-974 has biased composition (pro residues); the sequence is VGPPGPPGPPGPPGPP. At Pro-961 the chain carries 3-hydroxyproline. A 4-hydroxyproline modification is found at Pro-962. 3-hydroxyproline is present on Pro-964. At Pro-965 the chain carries 4-hydroxyproline. 3-hydroxyproline is present on Pro-967. 4-hydroxyproline occurs at positions 968, 971, and 974.

Belongs to the fibrillar collagen family. As to quaternary structure, trimers of one alpha 2(I) and two alpha 1(I) chains. Post-translationally, contains mostly 4-hydroxyproline. Proline residues at the third position of the tripeptide repeating unit (G-X-Y) are hydroxylated in some or all of the chains. Contains 3-hydroxyproline at a few sites. This modification occurs on the first proline residue in the sequence motif Gly-Pro-Hyp, where Hyp is 4-hydroxyproline. In terms of processing, lysine residues at the third position of the tripeptide repeating unit (G-X-Y) are 5-hydroxylated in some or all of the chains. Post-translationally, O-glycosylated on hydroxylated lysine residues. The O-linked glycan consists of a Glc-Gal disaccharide. Expressed in bones.

It is found in the secreted. It localises to the extracellular space. Its subcellular location is the extracellular matrix. Its function is as follows. Type I collagen is a member of group I collagen (fibrillar forming collagen). The sequence is that of Collagen alpha-1(I) chain from Scelidodon sp. (strain SLP-2019) (South American ground sloth).